Consider the following 391-residue polypeptide: Mannonate dehydratase (391 aa).

This sequence belongs to the mannonate dehydratase family. Fe(2+) serves as cofactor. Mn(2+) is required as a cofactor.

It carries out the reaction D-mannonate = 2-dehydro-3-deoxy-D-gluconate + H2O. It participates in carbohydrate metabolism; pentose and glucuronate interconversion. Its function is as follows. Catalyzes the dehydration of D-mannonate. This chain is Mannonate dehydratase, found in Marinomonas sp. (strain MWYL1).